The following is a 170-amino-acid chain: MSLPNPAELLPRMASDLRAHLAERGIERPRFVGIHTGGIWVAEALLRELGNQEPLGTLDVSFYRDDFTQNGLHPQVRPSALPFEIDGQHLVLVDDVLMSGRTIRAALNELFDYGRPASVTLVCLLDLNARELPIRPDVVGQTLSLGRDERVKLVGPAPLALERKVLSSAS.

Positions 90-102 (LVLVDDVLMSGRT) match the PRPP-binding motif.

This sequence belongs to the purine/pyrimidine phosphoribosyltransferase family. PyrR subfamily.

It catalyses the reaction UMP + diphosphate = 5-phospho-alpha-D-ribose 1-diphosphate + uracil. Functionally, regulates the transcription of the pyrimidine nucleotide (pyr) operon in response to exogenous pyrimidines. Its function is as follows. Also displays a weak uracil phosphoribosyltransferase activity which is not physiologically significant. This is Bifunctional protein PyrR from Pseudomonas aeruginosa (strain LESB58).